Consider the following 38-residue polypeptide: GVPINVKCSGSRDCLEPCKKAGMRFGKCINRKCHCTPK.

3 disulfide bridges follow: Cys-8-Cys-28, Cys-14-Cys-33, and Cys-18-Cys-35.

Belongs to the short scorpion toxin superfamily. Potassium channel inhibitor family. Alpha-KTx 03 subfamily. Expressed by the venom gland.

Its subcellular location is the secreted. Its function is as follows. Completely inhibits the (125)I-kaliotoxin binding on rat brain synaptosomes with high-affinity (IC(50)=0.1 nM). Is a potent Kv1.3/KCNA3 ligand. The chain is Potassium channel toxin alpha-KTx 3.17 from Buthus paris (Scorpion).